The following is a 306-amino-acid chain: Pantothenate kinase (306 aa).

Residue 91 to 98 (GSVAVGKS) coordinates ATP.

This sequence belongs to the prokaryotic pantothenate kinase family.

Its subcellular location is the cytoplasm. It carries out the reaction (R)-pantothenate + ATP = (R)-4'-phosphopantothenate + ADP + H(+). It functions in the pathway cofactor biosynthesis; coenzyme A biosynthesis; CoA from (R)-pantothenate: step 1/5. In Streptococcus pyogenes serotype M18 (strain MGAS8232), this protein is Pantothenate kinase (coaA).